The chain runs to 65 residues: Large ribosomal subunit protein bL35 (65 aa).

Residues 1–16 (MPKMKTHRASAKRFKK) show a composition bias toward basic residues. The interval 1 to 24 (MPKMKTHRASAKRFKKTANGGLKS) is disordered.

The protein belongs to the bacterial ribosomal protein bL35 family.

This is Large ribosomal subunit protein bL35 from Leuconostoc mesenteroides subsp. mesenteroides (strain ATCC 8293 / DSM 20343 / BCRC 11652 / CCM 1803 / JCM 6124 / NCDO 523 / NBRC 100496 / NCIMB 8023 / NCTC 12954 / NRRL B-1118 / 37Y).